A 209-amino-acid polypeptide reads, in one-letter code: Peptide deformylase 2 (209 aa).

Fe cation contacts are provided by C101 and H149. Residue E150 is part of the active site. Position 153 (H153) interacts with Fe cation.

The protein belongs to the polypeptide deformylase family. Fe(2+) is required as a cofactor.

It carries out the reaction N-terminal N-formyl-L-methionyl-[peptide] + H2O = N-terminal L-methionyl-[peptide] + formate. In terms of biological role, removes the formyl group from the N-terminal Met of newly synthesized proteins. Requires at least a dipeptide for an efficient rate of reaction. N-terminal L-methionine is a prerequisite for activity but the enzyme has broad specificity at other positions. The sequence is that of Peptide deformylase 2 from Coxiella burnetii (strain RSA 493 / Nine Mile phase I).